Here is a 185-residue protein sequence, read N- to C-terminus: Small ribosomal subunit protein uS5 (185 aa).

One can recognise an S5 DRBM domain in the interval 18-81; that stretch reads FVDKLVHINR…ESAKRALIRV (64 aa).

This sequence belongs to the universal ribosomal protein uS5 family. As to quaternary structure, part of the 30S ribosomal subunit. Contacts proteins S4 and S8.

With S4 and S12 plays an important role in translational accuracy. Its function is as follows. Located at the back of the 30S subunit body where it stabilizes the conformation of the head with respect to the body. In Azorhizobium caulinodans (strain ATCC 43989 / DSM 5975 / JCM 20966 / LMG 6465 / NBRC 14845 / NCIMB 13405 / ORS 571), this protein is Small ribosomal subunit protein uS5.